The chain runs to 229 residues: ATP synthase subunit a (229 aa).

6 consecutive transmembrane segments (helical) span residues 25–45 (ADAI…SLIA), 86–106 (IATL…PGFF), 111–131 (NLNT…IVGI), 142–162 (FMGP…IGHL), 181–201 (LVLM…MMLM), and 202–222 (GVLV…IYIQ).

This sequence belongs to the ATPase A chain family. In terms of assembly, F-type ATPases have 2 components, CF(1) - the catalytic core - and CF(0) - the membrane proton channel. CF(1) has five subunits: alpha(3), beta(3), gamma(1), delta(1), epsilon(1). CF(0) has three main subunits: a(1), b(2) and c(9-12). The alpha and beta chains form an alternating ring which encloses part of the gamma chain. CF(1) is attached to CF(0) by a central stalk formed by the gamma and epsilon chains, while a peripheral stalk is formed by the delta and b chains.

Its subcellular location is the cell inner membrane. Key component of the proton channel; it plays a direct role in the translocation of protons across the membrane. In Geobacter sulfurreducens (strain ATCC 51573 / DSM 12127 / PCA), this protein is ATP synthase subunit a.